Here is a 101-residue protein sequence, read N- to C-terminus: UPF0473 protein str1961 (101 aa).

The protein belongs to the UPF0473 family.

The sequence is that of UPF0473 protein str1961 from Streptococcus thermophilus (strain CNRZ 1066).